We begin with the raw amino-acid sequence, 883 residues long: MPSLNDIRSTFLNYFAKQGHEVVDSSPLVPRNDPTLMFTNSGMVQFKNCFTGVDRRDYVRATTAQKCVRAGGKHNDLDNVGYTARHHTFFEMLGNFSFGDYFKNEAIPFAWELITGEFDIPKDKLYTTVYHTDDEAFEIWKKVGVPEERIIRIATSDNFWQMGDTGPCGPCTEIFYDHGDHIWGGPPGSPEEDGDRFIEIWNLVFMQNERFADGSMVDLDMQSIDTGMGLERIAALLQGTHDNYETDLFKYLIEASATVTKSEPYGDQNVHHRVIADHLRSCSFLIAEGVLPSNEGRGYVLRRIMRRAMRHASLLGATDPVMHKLVPALVSQMGAAYPELGQGQALIEETFEQEETRFLKTLDRGLKLLDDASGDLEKGDVLPGETAFKLYDTFGFPLDLTQDALRAKGIEVDTDGFDAAMKAQKEQSRAGGIGLGDATDVKVYFDIVDAEGTTEFLGYETEKAEGQIVALVKDGARVDSAKAGESVQIILNQTPFYGESGGQVGDSGMLTVEGGAARITDTKKVEGLFLHIAEVTEGEIAVGSGAAMEVDHVRRSQIRANHSATHLLHEALRNALGDHVAQKGSLNAADRLRFDFSHNKAVSAEDLSKISAEVNDFIRQNSAVSTRIMTPDDARALGAQALFGEKYGEEVRVVSMGRAPTGKGADGETYSIELCGGTHVKQTGDIGTFVILGDSASSAGVRRIEALTGAAAFAHLEREAGRMAEVAASLKAQPADVMERLKALMDERKALQNEIATLKQQIAMGGGAGGGAEAKEIGGKTFLGQALQGVSGKDLRGLIDAHKQKIGSGVILLIAEDDGKVAVAAGVTDDLTGEISAVDVLKAAVPAVGGKGGGGRPDMAQGGGKDFSGADEAIKAAEALLKG.

Positions 562, 566, 675, and 679 each coordinate Zn(2+).

Belongs to the class-II aminoacyl-tRNA synthetase family. Requires Zn(2+) as cofactor.

The protein localises to the cytoplasm. It catalyses the reaction tRNA(Ala) + L-alanine + ATP = L-alanyl-tRNA(Ala) + AMP + diphosphate. Catalyzes the attachment of alanine to tRNA(Ala) in a two-step reaction: alanine is first activated by ATP to form Ala-AMP and then transferred to the acceptor end of tRNA(Ala). Also edits incorrectly charged Ser-tRNA(Ala) and Gly-tRNA(Ala) via its editing domain. The protein is Alanine--tRNA ligase of Ruegeria sp. (strain TM1040) (Silicibacter sp.).